We begin with the raw amino-acid sequence, 636 residues long: Threonine--tRNA ligase (636 aa).

Residues 1-63 (MNEINVTLPD…ADGARVEIVT (63 aa)) form the TGS domain. Positions 243-534 (DHRKLGRELD…LIEHFAGNFP (292 aa)) are catalytic. Residues cysteine 335, histidine 386, and histidine 511 each contribute to the Zn(2+) site.

The protein belongs to the class-II aminoacyl-tRNA synthetase family. As to quaternary structure, homodimer. Zn(2+) serves as cofactor.

It is found in the cytoplasm. It catalyses the reaction tRNA(Thr) + L-threonine + ATP = L-threonyl-tRNA(Thr) + AMP + diphosphate + H(+). Catalyzes the attachment of threonine to tRNA(Thr) in a two-step reaction: L-threonine is first activated by ATP to form Thr-AMP and then transferred to the acceptor end of tRNA(Thr). Also edits incorrectly charged L-seryl-tRNA(Thr). This is Threonine--tRNA ligase from Geobacter sp. (strain M21).